Reading from the N-terminus, the 7067-residue chain is Replicase polyprotein 1ab (7067 aa).

One can recognise a CoV Nsp1 globular domain in the interval Thr12 to Gly127. The region spanning Glu148–Gly179 is the BetaCoV Nsp1 C-terminal domain. One can recognise a CoV Nsp2 N-terminal domain in the interval Thr183–Arg456. The Zn(2+) site is built by Cys200, Cys231, His234, His236, Cys323, Cys326, Cys341, Cys344, Cys370, Cys373, His382, and Cys416. The tract at residues Cys200 to His236 is C2H2. Residues Cys323 to Cys344 form a C4 region. The segment at Cys370–Cys416 is C2HC. The CoV Nsp2 middle domain maps to Arg458 to Met688. The region spanning Leu690–Gly818 is the CoV Nsp2 C-terminal domain. Residues Lys822–Glu930 enclose the Ubiquitin-like 1 domain. Macro domains are found at residues Val998–Leu1164, Lys1201–Glu1329, and Val1337–Ser1464. Residues Thr1466–Ser1532 form the DPUP domain. The region spanning Val1536–Val1591 is the Ubiquitin-like 2 domain. Residues Tyr1605 to Gly1869 form the Peptidase C16 domain. The For PL-PRO activity role is filled by Cys1645. Zn(2+)-binding residues include Cys1723, Cys1726, Cys1758, and Cys1760. The C4-type zinc-finger motif lies at Cys1723 to Cys1760. Active-site for PL-PRO activity residues include His1806 and Asp1820. A Nucleic acid-binding domain is found at Pro1882 to Thr1992. One can recognise a G2M domain in the interval Thr2017–Asn2126. Residues Leu2086 to Trp2365 are HD1. The helical transmembrane segment at Leu2197–Val2217 threads the bilayer. The 3Ecto domain maps to Thr2218–Asp2288. Cystine bridges form between Cys2234–Cys2262 and Cys2253–Cys2259. 2 helical membrane-spanning segments follow: residues Trp2298–Met2318 and Met2345–Trp2365. The segment at Lys2366–Asp2456 is Y1. The CoV Nsp3 Y domain occupies Lys2366–Gly2734. Zn(2+) contacts are provided by His2370, Cys2375, Cys2380, Cys2383, Cys2416, His2419, Cys2423, and Cys2426. The interval His2370–Cys2383 is ZF1. The ZF2 stretch occupies residues Cys2416–Cys2426. Residues Gln2457–Val2551 are Y2. The interval Gln2457–Gly2734 is coV-Y. A Y3 region spans residues Gly2552–Asp2633. The tract at residues Ile2634–Gly2734 is Y4. The next 7 helical transmembrane spans lie at Leu2744–Val2764, Pro2986–Val3006, Ala3016–Met3036, Val3048–Ala3068, Phe3071–Val3091, Trp3099–Ile3119, and Val3136–Leu3156. Positions Leu2749–Leu3156 are HD2. One can recognise a Nsp4C domain in the interval Val3136–Gln3234. The 306-residue stretch at Ser3235–Gln3540 folds into the Peptidase C30 domain. Residues His3275 and Cys3379 each act as for 3CL-PRO activity in the active site. Helical transmembrane passes span Phe3558–Tyr3578, Asn3580–Val3600, Phe3606–Met3626, Asp3652–Tyr3672, Val3679–Leu3698, Ile3722–Ile3742, and Ile3750–Leu3770. The segment at Phe3558 to Leu3770 is HD3. The RdRp Nsp7 cofactor domain occupies Ser3831–Gln3913. The 198-residue stretch at Ala3914–Gln4111 folds into the RdRp Nsp8 cofactor domain. Positions Asn4112 to Gln4224 constitute a Nsp9 ssRNA-binding domain. The ExoN/MTase coactivator domain maps to Ala4225–Gln4363. Zn(2+) contacts are provided by Cys4298, Cys4301, His4307, Cys4314, Cys4341, Cys4344, Cys4352, and Cys4354. Zinc fingers lie at residues Cys4298–Cys4314 and Cys4341–Cys4354. The 255-residue stretch at Phe4370–Leu4624 folds into the NiRAN domain. Residues Asn4572 and Asp4581 each coordinate Mn(2+). The 99-residue stretch at Val4629–Ser4727 folds into the Nsp12 Interface domain. Positions 4658, 4664, 4669, 4673, and 4850 each coordinate Zn(2+). One can recognise a Nsp12 RNA-dependent RNA polymerase domain in the interval Arg4728 to Gln5295. The rdRp Fingers N-ter stretch occupies residues Ser4730–Ala4944. The rdRp Palm N-ter stretch occupies residues Thr4945 to Pro4983. The region spanning Pro4975–Gly5137 is the RdRp catalytic domain. Positions Lys4984–Gly5042 are rdRp Fingers C-ter. Positions 5005, 5008, and 5009 each coordinate Zn(2+). A rdRp Palm C-ter region spans residues Thr5043–Gln5178. Catalysis depends on residues Ser5122, Asp5123, and Asp5124. Residues His5179 to Gln5295 form a rdRp Thumb region. The CV ZBD domain maps to Ala5296–Asp5408. Cys5300, Cys5303, Cys5311, Cys5314, Cys5321, Cys5324, His5328, His5334, Cys5345, Cys5350, Cys5367, and His5370 together coordinate Zn(2+). Residues Asn5552–Leu5733 form the (+)RNA virus helicase ATP-binding domain. Residue Gly5577–Ser5584 participates in ATP binding. The (+)RNA virus helicase C-terminal domain maps to Gly5734 to Leu5903. Positions Met5968 to Val6183 constitute an ExoN domain. Active-site residues include Asp5986, Glu5988, and Glu6087. Positions 6103, 6106, 6122, 6125, 6153, 6157, and 6160 each coordinate Zn(2+). Catalysis depends on residues His6164 and Asp6169. Residue Cys6175 participates in Zn(2+) binding. Positions Tyr6192 to Gln6423 constitute an N7-MTase domain. Asp6227 to Ala6233 lines the S-adenosyl-L-methionine pocket. A gpppA-binding region spans residues Cys6310 to Thr6324. 4 residues coordinate Zn(2+): Cys6348, Cys6369, Cys6380, and His6383. In terms of domain architecture, Nsp15 N-terminal oligomerization spans Ser6424–Arg6484. In terms of domain architecture, AV-Nsp11N/CoV-Nsp15M spans Asn6485–Gln6610. The region spanning Lys6627–Pro6766 is the NendoU domain. Catalysis depends on residues His6657, His6672, Lys6712, Lys6815, Asp6899, Lys6939, and Glu6972. In terms of domain architecture, Nidovirus-type SAM-dependent 2'-O-MTase spans Ser6771–Val7065.

It belongs to the coronaviruses polyprotein 1ab family. Interacts with host PHB and PHB2. As to quaternary structure, interacts with papain-like protease nsp3 and non-structural protein 6. In terms of assembly, monomer. Homodimer. Only the homodimer shows catalytic activity. Interacts with nsp8 and nsp12 to form the replication-transcription complex (RTC): nsp12, nsp7, two subunits of nsp8, and up to two subunits of nsp13. As to quaternary structure, interacts with nsp7, nsp13 and nsp12 to form the replication-transcription complex (RTC): nsp12, nsp7, two subunits of nsp8, and up to two subunits of nsp13. In terms of assembly, interacts with nsp12. Interacts with proofreading exoribonuclease nsp14 and 2'-O-methyltransferase nsp16; these interactions enhance nsp14 and nsp16 enzymatic activities. As to quaternary structure, interacts with nsp7 and nsp8 to form the replication-transcription complex (RTC): nsp12, nsp7, two subunits of nsp8, and up to two subunits of nsp13. Interacts with nsp9. In terms of assembly, interacts with nsp8 to form the replication-transcription complex (RTC): nsp12, nsp7, two subunits of nsp8, and up to two subunits of nsp13. Requires Mn(2+) as cofactor. The cofactor is Mg(2+). Post-translationally, specific enzymatic cleavages in vivo by its own proteases yield mature proteins. 3CL-PRO and PL-PRO proteinases are autocatalytically processed.

The protein localises to the host membrane. Its subcellular location is the host cytoplasm. It is found in the host perinuclear region. The protein resides in the host endoplasmic reticulum-Golgi intermediate compartment. The catalysed reaction is RNA(n) + a ribonucleoside 5'-triphosphate = RNA(n+1) + diphosphate. It carries out the reaction ATP + H2O = ADP + phosphate + H(+). It catalyses the reaction Thiol-dependent hydrolysis of ester, thioester, amide, peptide and isopeptide bonds formed by the C-terminal Gly of ubiquitin (a 76-residue protein attached to proteins as an intracellular targeting signal).. The enzyme catalyses a 5'-end (N(7)-methyl 5'-triphosphoguanosine)-ribonucleoside in mRNA + S-adenosyl-L-methionine = a 5'-end (N(7)-methyl 5'-triphosphoguanosine)-(2'-O-methyl-ribonucleoside) in mRNA + S-adenosyl-L-homocysteine + H(+). The catalysed reaction is uridylyl-uridylyl-ribonucleotide-RNA = a 3'-end uridylyl-2',3'-cyclophospho-uridine-RNA + a 5'-end dephospho-ribonucleoside-RNA. It carries out the reaction a 5'-end diphospho-ribonucleoside in mRNA + GTP + H(+) = a 5'-end (5'-triphosphoguanosine)-ribonucleoside in mRNA + diphosphate. It catalyses the reaction a 5'-end (5'-triphosphoguanosine)-ribonucleoside in mRNA + S-adenosyl-L-methionine = a 5'-end (N(7)-methyl 5'-triphosphoguanosine)-ribonucleoside in mRNA + S-adenosyl-L-homocysteine. Its function is as follows. The replicase polyprotein of coronaviruses is a multifunctional protein: it contains the activities necessary for the transcription of negative stranded RNA, leader RNA, subgenomic mRNAs and progeny virion RNA as well as proteinases responsible for the cleavage of the polyprotein into functional products. Inhibits host translation by interacting with the 40S ribosomal subunit. The nsp1-40S ribosome complex further induces an endonucleolytic cleavage near the 5'UTR of host mRNAs, targeting them for degradation. Viral mRNAs are not susceptible to nsp1-mediated endonucleolytic RNA cleavage thanks to the presence of a 5'-end leader sequence and are therefore protected from degradation. By suppressing host gene expression, nsp1 facilitates efficient viral gene expression in infected cells and evasion from host immune response. In terms of biological role, may play a role in the modulation of host cell survival signaling pathway by interacting with host PHB and PHB2. Indeed, these two proteins play a role in maintaining the functional integrity of the mitochondria and protecting cells from various stresses. Functionally, responsible for the cleavages located at the N-terminus of the replicase polyprotein. In addition, PL-PRO possesses a deubiquitinating/deISGylating activity and processes both 'Lys-48'- and 'Lys-63'-linked polyubiquitin chains from cellular substrates. Participates together with nsp4 in the assembly of virally-induced cytoplasmic double-membrane vesicles necessary for viral replication. Antagonizes innate immune induction of type I interferon by blocking the phosphorylation, dimerization and subsequent nuclear translocation of host IRF3. Also prevents host NF-kappa-B signaling. Its function is as follows. Participates in the assembly of virally-induced cytoplasmic double-membrane vesicles necessary for viral replication. Cleaves the C-terminus of replicase polyprotein at 11 sites. Recognizes substrates containing the core sequence [ILMVF]-Q-|-[SGACN]. Also able to bind an ADP-ribose-1''-phosphate (ADRP). In terms of biological role, plays a role in the initial induction of autophagosomes from host endoplasmic reticulum. Later, limits the expansion of these phagosomes that are no longer able to deliver viral components to lysosomes. Functionally, forms a hexadecamer with nsp8 (8 subunits of each) that may participate in viral replication by acting as a primase. Alternatively, may synthesize substantially longer products than oligonucleotide primers. Its function is as follows. Forms a hexadecamer with nsp7 (8 subunits of each) that may participate in viral replication by acting as a primase. Alternatively, may synthesize substantially longer products than oligonucleotide primers. Forms a primer, NSP9-pU, which is utilized by the polymerase for the initiation of RNA chains. Interacts with ribosome signal recognition particle RNA (SRP). Together with NSP8, suppress protein integration into the cell membrane, thereby disrupting host immune defenses. In terms of biological role, plays a pivotal role in viral transcription by stimulating both nsp14 3'-5' exoribonuclease and nsp16 2'-O-methyltransferase activities. Therefore plays an essential role in viral mRNAs cap methylation. Functionally, RNA-directed RNA polymerase that catalyzes the transcription of viral genomic and subgenomic RNAs. Acts in complex with nsp7 and nsp8 to transcribe both the minus and positive strands of genomic RNA. The kinase-like NiRAN domain of NSP12 attaches one or more nucleotides to the amino terminus of NSP9, forming a covalent RNA-protein intermediate that serves as transcription/replication primer. Subgenomic RNAs (sgRNAs) are formed by discontinuous transcription: The polymerase has the ability to pause at transcription-regulating sequences (TRS) and jump to the leader TRS, resulting in a major deletion. This creates a series of subgenomic RNAs that are replicated, transcribed and translated. In addition, Nsp12 is a subunit of the viral RNA capping enzyme that catalyzes the RNA guanylyltransferase reaction for genomic and sub-genomic RNAs. Subsequently, the NiRAN domain transfers RNA to GDP, and forms the core cap structure GpppA-RNA. Its function is as follows. Multi-functional protein with a zinc-binding domain in N-terminus displaying RNA and DNA duplex-unwinding activities with 5' to 3' polarity. Activity of helicase is dependent on magnesium. Plays a role in viral RNA synthesis through two distinct activities. The N7-guanine methyltransferase activity plays a role in the formation of the cap structure GpppA-RNA. The proofreading exoribonuclease reduces the sensitivity of the virus to RNA mutagens during replication. This activity acts on both ssRNA and dsRNA in a 3'-5' direction. In terms of biological role, plays a role in viral transcription/replication and prevents the simultaneous activation of host cell dsRNA sensors, such as MDA5/IFIH1, OAS, and PKR. Acts by degrading the 5'-polyuridines generated during replication of the poly(A) region of viral genomic and subgenomic RNAs. Catalyzes a two-step reaction in which a 2'3'-cyclic phosphate (2'3'-cP) is first generated by 2'-O transesterification, which is then hydrolyzed to a 3'-phosphate (3'-P). If not degraded, poly(U) RNA would hybridize with poly(A) RNA tails and activate host dsRNA sensors. Functionally, methyltransferase that mediates mRNA cap 2'-O-ribose methylation to the 5'-cap structure of viral mRNAs. N7-methyl guanosine cap is a prerequisite for binding of nsp16. Therefore plays an essential role in viral mRNAs cap methylation which is essential to evade immune system. The sequence is that of Replicase polyprotein 1ab (rep) from Bat coronavirus HKU3 (BtCoV).